Consider the following 118-residue polypeptide: C-X-C motif chemokine 17 (118 aa).

The signal sequence occupies residues methionine 1–serine 22. Intrachain disulfides connect cysteine 74–cysteine 102 and cysteine 76–cysteine 109.

It belongs to the intercrine alpha (chemokine CxC) family.

The protein resides in the secreted. Its function is as follows. Chemokine that acts as a chemoattractant for monocytes, macrophages and dendritic cells. Plays a role in angiogenesis and possibly in the development of tumors. Acts as an anti-inflammatory in the stomach. May play a role in the innate defense against infections. Activates the C-X-C chemokine receptor GPR35 to induce a rapid and transient rise in the level of intracellular calcium ions. In Bos taurus (Bovine), this protein is C-X-C motif chemokine 17 (CXCL17).